Here is a 185-residue protein sequence, read N- to C-terminus: Uroplakin-2 (185 aa).

Positions 1-26 (MASPWPVWTLSWILILLAVLVPGAAA) are cleaved as a signal peptide. Residues 27–85 (DFNISSLSGLLSPVMTESLLVALPPCHLTGGNATLTVRRANDSKVVRSSFVVPPCRGRR) constitute a propeptide that is removed on maturation. 3 N-linked (GlcNAc...) asparagine glycosylation sites follow: asparagine 29, asparagine 58, and asparagine 67. Residues 86–156 (ELVSVVDSGS…IGLAMARTGG (71 aa)) lie on the Lumenal side of the membrane. The chain crosses the membrane as a helical span at residues 157 to 177 (MVVITVLLSVAMFLLVLGLII). Over 178 to 185 (ALALGARK) the chain is Cytoplasmic.

Belongs to the uroplakin-2 family. In terms of assembly, interacts with uroplakin-1a (UPK1A). Bladder epithelium.

Its subcellular location is the cell membrane. Component of the asymmetric unit membrane (AUM); a highly specialized biomembrane elaborated by terminally differentiated urothelial cells. May play an important role in regulating the assembly of the AUM. In Bos taurus (Bovine), this protein is Uroplakin-2 (UPK2).